A 626-amino-acid polypeptide reads, in one-letter code: MGKVIGIDLGTTNSAMAYYDGKDAKIIANKEGRNTTPSVVAFTDKGEVLVGEPAKRQAITNPERTIYSVKRIMGMMCNEPKAQEAKKHVQYKIVDKNGACAVEVDGKVYTPQEISAKILMKLKKDAEEFFGEEVTEAVITVPAYFNDSQRKATQEAGKIAGLNVLRIINEPTAAALAYGLDKKGEEKILVYDLGGGTFDVTVLEIGDGTFQVLATDGNAFLGGDDFDNRIVDWLISEFKAETGIDLSQDKMALQRLKDAAEQAKKELSTKEETEINLPFITADASGPKHLVKKLTRAKFEAMIDDLLQETLRHIDTALEDAGLSKDEIDEIVMVGGSTRIPKVQELVSNYFNGKKLNKSVNPDEVVALGAAIQAGVLKGDVKDVLLLDVTPLSLGIETLGGVMTKIIEKGTTIPVKKSQVFSTAEDNQTAVTIHVLQGEAELAKDNKSLGQFNLEGIPPAPRGVPQIEVTFDIDANGVLNVSAKDKTSGKEQKITITGSSTLSEEEIERMVREAEEANRKEKARIEAIKARNELDAVAYQAEKFINDNKDKLGDVSALEAKIKEAKELIEQQSEDKAKIEALKNEINTELQNVAQNMAQQQQAQGGAQQQNQNKGGDDDVIDAEVE.

Thr197 is modified (phosphothreonine; by autocatalysis). The span at Gln595–Lys614 shows a compositional bias: low complexity. The tract at residues Gln595 to Glu626 is disordered.

This sequence belongs to the heat shock protein 70 family.

Functionally, acts as a chaperone. This Nautilia profundicola (strain ATCC BAA-1463 / DSM 18972 / AmH) protein is Chaperone protein DnaK.